The chain runs to 237 residues: UPF0173 metal-dependent hydrolase BruAb2_0628 (237 aa).

The protein belongs to the UPF0173 family.

The protein is UPF0173 metal-dependent hydrolase BruAb2_0628 of Brucella abortus biovar 1 (strain 9-941).